Consider the following 231-residue polypeptide: 5'-methylthioadenosine/S-adenosylhomocysteine nucleosidase (231 aa).

Glu-13 functions as the Proton acceptor in the catalytic mechanism. Residues Gly-79, Met-154, and 175–176 (ME) each bind substrate. Asp-199 acts as the Proton donor in catalysis.

This sequence belongs to the PNP/UDP phosphorylase family. MtnN subfamily.

The catalysed reaction is S-adenosyl-L-homocysteine + H2O = S-(5-deoxy-D-ribos-5-yl)-L-homocysteine + adenine. It catalyses the reaction S-methyl-5'-thioadenosine + H2O = 5-(methylsulfanyl)-D-ribose + adenine. The enzyme catalyses 5'-deoxyadenosine + H2O = 5-deoxy-D-ribose + adenine. The protein operates within amino-acid biosynthesis; L-methionine biosynthesis via salvage pathway; S-methyl-5-thio-alpha-D-ribose 1-phosphate from S-methyl-5'-thioadenosine (hydrolase route): step 1/2. Functionally, catalyzes the irreversible cleavage of the glycosidic bond in both 5'-methylthioadenosine (MTA) and S-adenosylhomocysteine (SAH/AdoHcy) to adenine and the corresponding thioribose, 5'-methylthioribose and S-ribosylhomocysteine, respectively. Also cleaves 5'-deoxyadenosine, a toxic by-product of radical S-adenosylmethionine (SAM) enzymes, into 5-deoxyribose and adenine. The sequence is that of 5'-methylthioadenosine/S-adenosylhomocysteine nucleosidase from Marinomonas sp. (strain MWYL1).